The sequence spans 194 residues: Histone H1 (194 aa).

At A1 the chain carries N-acetylalanine; partial. A compositionally biased stretch (low complexity) spans 1–14 (AEVAPAPAAAAPAK). 2 disordered regions span residues 1–31 (AEVA…GPAV) and 105–194 (AKKP…AAKK). Residues 15-26 (APKKKAAAKPKK) show a composition bias toward basic residues. One can recognise an H15 domain in the interval 27-100 (SGPAVGELAG…GASGSFKLNK (74 aa)). Residues 116–194 (KAKKVAAKKP…KVKKPAAAKK (79 aa)) show a composition bias toward basic residues. A phosphoserine mark is found at S145, S161, and S182.

This sequence belongs to the histone H1/H5 family.

It localises to the nucleus. It is found in the chromosome. In terms of biological role, histones H1 are necessary for the condensation of nucleosome chains into higher-order structures. This is Histone H1 from Salmo trutta (Brown trout).